A 282-amino-acid polypeptide reads, in one-letter code: Shikimate dehydrogenase (NADP(+)) (282 aa).

Residues 18–20 (SRS) and Thr-65 each bind shikimate. Lys-69 functions as the Proton acceptor in the catalytic mechanism. An NADP(+)-binding site is contributed by Glu-81. Residues Asn-90 and Asp-105 each coordinate shikimate. NADP(+)-binding positions include 130–134 (GAGGA), 154–159 (NRTPAR), and Met-222. Tyr-224 provides a ligand contact to shikimate. An NADP(+)-binding site is contributed by Gly-245.

It belongs to the shikimate dehydrogenase family. As to quaternary structure, homodimer.

It catalyses the reaction shikimate + NADP(+) = 3-dehydroshikimate + NADPH + H(+). Its pathway is metabolic intermediate biosynthesis; chorismate biosynthesis; chorismate from D-erythrose 4-phosphate and phosphoenolpyruvate: step 4/7. Its function is as follows. Involved in the biosynthesis of the chorismate, which leads to the biosynthesis of aromatic amino acids. Catalyzes the reversible NADPH linked reduction of 3-dehydroshikimate (DHSA) to yield shikimate (SA). This chain is Shikimate dehydrogenase (NADP(+)), found in Acidovorax ebreus (strain TPSY) (Diaphorobacter sp. (strain TPSY)).